The primary structure comprises 509 residues: Cardiolipin synthase 1 (509 aa).

Helical transmembrane passes span 4–24 (PIIQ…LLNT), 30–50 (YTFV…VIFI), and 59–79 (LAWF…YSIF). PLD phosphodiesterase domains follow at residues 238-265 (VNYR…GDEY) and 422-449 (KDGF…DVRS). Catalysis depends on residues H243, K245, D250, H427, K429, and D434.

Belongs to the phospholipase D family. Cardiolipin synthase subfamily.

The protein localises to the cell membrane. It carries out the reaction 2 a 1,2-diacyl-sn-glycero-3-phospho-(1'-sn-glycerol) = a cardiolipin + glycerol. Its function is as follows. Catalyzes the reversible phosphatidyl group transfer from one phosphatidylglycerol molecule to another to form cardiolipin (CL) (diphosphatidylglycerol) and glycerol. In Bacillus anthracis, this protein is Cardiolipin synthase 1 (cls1).